Reading from the N-terminus, the 736-residue chain is Subtilisin-like protease SBT4.12 (736 aa).

The first 24 residues, 1–24 (MANLAASTCLYSWLLVLLLSSVSA), serve as a signal peptide directing secretion. A propeptide spans 25-110 (IIDEDTQVYI…VFPNKILQLH (86 aa)) (activation peptide). The Inhibitor I9 domain occupies 32-110 (VYIVYMGSLS…VFPNKILQLH (79 aa)). The Peptidase S8 domain occupies 114–580 (SWDFMGVKEG…AGHVDPMAAL (467 aa)). D142 acts as the Charge relay system in catalysis. N173 carries N-linked (GlcNAc...) asparagine glycosylation. The active-site Charge relay system is the H197. N-linked (GlcNAc...) asparagine glycans are attached at residues N220, N381, and N459. Positions 353 to 437 (KYPLVYGKSA…GLKAKDFKSL (85 aa)) constitute a PA domain. The active-site Charge relay system is S519. Residues N601, N649, and N659 are each glycosylated (N-linked (GlcNAc...) asparagine).

Belongs to the peptidase S8 family. In terms of processing, the C-terminal propeptide is autocleaved. As to expression, specifically expressed in root stele of the root hair zone.

It is found in the secreted. This is Subtilisin-like protease SBT4.12 from Arabidopsis thaliana (Mouse-ear cress).